A 1141-amino-acid polypeptide reads, in one-letter code: Eukaryotic translation initiation factor 3 subunit A (1141 aa).

Positions 319–501 constitute a PCI domain; it reads LQRMAAHVLL…NSIYFGTDLT (183 aa). Composition is skewed to basic and acidic residues over residues 588 to 623 and 829 to 899; these read QNNA…EERE and AAEE…RGGD. Disordered stretches follow at residues 588-631 and 829-1141; these read QNNA…QNEI and AAEE…VKRR. Serine 908 carries the post-translational modification Phosphoserine. Basic and acidic residues-rich tracts occupy residues 920–976, 990–1051, 1059–1087, and 1110–1131; these read ERND…EPDT, SRDD…EPQR, DAPR…RGDQ, and TREE…KAGD.

Belongs to the eIF-3 subunit A family. Component of the eukaryotic translation initiation factor 3 (eIF-3) complex. The eIF-3 complex interacts with pix.

The protein resides in the cytoplasm. In terms of biological role, RNA-binding component of the eukaryotic translation initiation factor 3 (eIF-3) complex, which is involved in protein synthesis of a specialized repertoire of mRNAs and, together with other initiation factors, stimulates binding of mRNA and methionyl-tRNAi to the 40S ribosome. The eIF-3 complex specifically targets and initiates translation of a subset of mRNAs involved in cell proliferation. The polypeptide is Eukaryotic translation initiation factor 3 subunit A (Drosophila sechellia (Fruit fly)).